The primary structure comprises 372 residues: Biglycan (372 aa).

The signal sequence occupies residues 1 to 19 (MPTMWPLWLLASLLALSQA). Residues 20 to 40 (LPFEQKGFWDFTLDDGLPMLN) constitute a propeptide that is removed on maturation. Residues S45 and S51 are each glycosylated (O-linked (Xyl...) (glycosaminoglycan) serine). 2 disulfides stabilise this stretch: C67–C73 and C71–C80. LRR repeat units follow at residues 86–106 (KAVP…NNEI), 107–130 (SELR…NNKI), 131–154 (SKIH…KNHL), 155–175 (VEIP…DNRI), 176–199 (RKVP…GNPL), 200–224 (ENSG…EAKL), 225–245 (TGIP…HNKI), 246–269 (QAIE…HNQI), 270–293 (RMIE…NNKL), 294–316 (SRVP…TNNI), 317–346 (TKVG…NNPV), and 347–372 (PYWE…NYKK). Residues N274 and N315 are each glycosylated (N-linked (GlcNAc...) asparagine). C325 and C358 are disulfide-bonded.

The protein belongs to the small leucine-rich proteoglycan (SLRP) family. SLRP class I subfamily. Homodimer. Forms a ternary complex with MFAP2 and ELN. In terms of processing, the two attached glycosaminoglycan chains can be either chondroitin sulfate or dermatan sulfate.

It localises to the secreted. The protein localises to the extracellular space. Its subcellular location is the extracellular matrix. In terms of biological role, may be involved in collagen fiber assembly. This chain is Biglycan (BGN), found in Equus caballus (Horse).